The following is a 469-amino-acid chain: 3-isopropylmalate dehydratase large subunit (469 aa).

Residues Cys347, Cys410, and Cys413 each contribute to the [4Fe-4S] cluster site.

It belongs to the aconitase/IPM isomerase family. LeuC type 1 subfamily. As to quaternary structure, heterodimer of LeuC and LeuD. [4Fe-4S] cluster serves as cofactor.

It carries out the reaction (2R,3S)-3-isopropylmalate = (2S)-2-isopropylmalate. Its pathway is amino-acid biosynthesis; L-leucine biosynthesis; L-leucine from 3-methyl-2-oxobutanoate: step 2/4. Functionally, catalyzes the isomerization between 2-isopropylmalate and 3-isopropylmalate, via the formation of 2-isopropylmaleate. The sequence is that of 3-isopropylmalate dehydratase large subunit from Burkholderia mallei (strain NCTC 10247).